A 108-amino-acid chain; its full sequence is uncharacterized protein (108 aa).

Basic and acidic residues predominate over residues 1–10; it reads MDMLHNKCSD. The tract at residues 1–27 is disordered; it reads MDMLHNKCSDAIKSTSNSNLSNEVDKQ. A compositionally biased stretch (polar residues) spans 12-22; that stretch reads IKSTSNSNLSN.

This is an uncharacterized protein from Saccharomyces cerevisiae (strain ATCC 204508 / S288c) (Baker's yeast).